The sequence spans 906 residues: Coatomer subunit beta' (906 aa).

WD repeat units follow at residues 13 to 52 (ARSD…LVKT), 55 to 94 (VCDL…RVHM), 97 to 136 (AHSD…SCSQ), 140 to 180 (GHTH…PNFT), 183 to 224 (GHEK…CVQT), 227 to 266 (GHAQ…LEST), 350 to 388 (SCEI…NKSF), and 390 to 425 (SAQE…KSFK). An N6-acetyllysine modification is found at Lys627. One copy of the WD 9 repeat lies at 746–783 (IRTGRLPEAAFLARTYLPSQVSRVVKLWRENLSKVNQK). The interval 837-862 (EEAKGFQPSRSTAQQELDGKPASPTP) is disordered. Residue Ser859 is modified to Phosphoserine. Thr861 carries the phosphothreonine modification. Residues 866 to 890 (ASHTANKEEKSLLELEVDLDNLELE) are a coiled coil.

The protein belongs to the WD repeat COPB2 family. Oligomeric complex that consists of at least the alpha, beta, beta', gamma, delta, epsilon and zeta subunits. Probably interacts with PEX11A. Interacts with SCYL1. Interacts with JAGN1.

The protein resides in the cytoplasm. It is found in the cytosol. The protein localises to the golgi apparatus membrane. Its subcellular location is the cytoplasmic vesicle. It localises to the COPI-coated vesicle membrane. Its function is as follows. The coatomer is a cytosolic protein complex that binds to dilysine motifs and reversibly associates with Golgi non-clathrin-coated vesicles, which further mediate biosynthetic protein transport from the ER, via the Golgi up to the trans Golgi network. Coatomer complex is required for budding from Golgi membranes, and is essential for the retrograde Golgi-to-ER transport of dilysine-tagged proteins. In mammals, the coatomer can only be recruited by membranes associated to ADP-ribosylation factors (ARFs), which are small GTP-binding proteins; the complex also influences the Golgi structural integrity, as well as the processing, activity, and endocytic recycling of LDL receptors. Functionally, this coatomer complex protein, essential for Golgi budding and vesicular trafficking, is a selective binding protein (RACK) for protein kinase C, epsilon type. It binds to Golgi membranes in a GTP-dependent manner. This chain is Coatomer subunit beta' (COPB2), found in Macaca fascicularis (Crab-eating macaque).